A 908-amino-acid polypeptide reads, in one-letter code: DNA (cytosine-5)-methyltransferase 3A (908 aa).

Polar residues predominate over residues M1–S13. Disordered regions lie at residues M1–R183 and S226–E281. Basic and acidic residues predominate over residues L14–E37. Residues K44–H54 show a composition bias toward basic residues. Positions T69–G80 are enriched in polar residues. Residue S102 is modified to Phosphoserine. The span at G110–A124 shows a compositional bias: low complexity. Residue T120 is modified to Phosphothreonine. A Glycyl lysine isopeptide (Lys-Gly) (interchain with G-Cter in SUMO2) cross-link involves residue K158. R167 is modified (omega-N-methylarginine). Residues S195–N399 form an interaction with DNMT1 and DNMT3B region. 2 positions are modified to phosphoserine: S239 and S251. Residues A242–T256 are compositionally biased toward polar residues. T257 is subject to Phosphothreonine. Residues T257–S315 enclose the PWWP domain. The span at A265 to D275 shows a compositional bias: basic and acidic residues. 2 positions are modified to phosphoserine: S386 and S389. The segment at A443–K462 is disordered. The 133-residue stretch at E478 to D610 folds into the ADD domain. A GATA-type; atypical zinc finger spans residues I489–E519. The segment at C490–C582 is interaction with the PRC2/EED-EZH2 complex. Residues Q530–G586 form a PHD-type; atypical zinc finger. An SAM-dependent MTase C5-type domain is found at I630–V908. S-adenosyl-L-methionine-binding positions include D637 to T641, E660, and D682 to R684. C706 is a catalytic residue. C706 is modified (S-methylcysteine; by autocatalysis). Residue R887–W889 participates in S-adenosyl-L-methionine binding.

The protein belongs to the class I-like SAM-binding methyltransferase superfamily. C5-methyltransferase family. As to quaternary structure, heterotetramer composed of 1 DNMT3A homodimer and 2 DNMT3L subunits (DNMT3L-DNMT3A-DNMT3A-DNMT3L). Interacts with DNMT1 and DNMT3B. Interacts with MPHOSPH8. Interacts with histone H3 that is not methylated at 'Lys-4' (H3K4). Binds the ZBTB18 transcriptional repressor. Interacts with SETDB1. Associates with HDAC1 through its ADD domain. Interacts with UHRF1. Interacts with the PRC2/EED-EZH2 complex. Interacts with UBC9, PIAS1 and PIAS2. Interacts with SPOCD1. Interacts with ZNF263; recruited to the SIX3 promoter along with other proteins involved in chromatin modification and transcriptional corepression where it contributes to transcriptional repression. Sumoylated; sumoylation disrupts the ability to interact with histone deacetylases (HDAC1 and HDAC2) and repress transcription. Post-translationally, auto-methylated at Cys-706: auto-methylation takes place in absence of DNA substrate and inactivates the DNA methyltransferase activity. Inactivation by auto-methylation may be used to inactivate unused DNA methyltransferases in the cell.

It localises to the nucleus. Its subcellular location is the chromosome. The protein localises to the cytoplasm. It carries out the reaction a 2'-deoxycytidine in DNA + S-adenosyl-L-methionine = a 5-methyl-2'-deoxycytidine in DNA + S-adenosyl-L-homocysteine + H(+). The catalysed reaction is L-cysteinyl-[protein] + S-adenosyl-L-methionine = S-methyl-L-cysteinyl-[protein] + S-adenosyl-L-homocysteine + H(+). With respect to regulation, activated by binding to the regulatory factor DNMT3L. Auto-methylation at Cys-706 in absence of DNA inactivates the DNA methyltransferase activity. Its function is as follows. Required for genome-wide de novo methylation and is essential for the establishment of DNA methylation patterns during development. DNA methylation is coordinated with methylation of histones. It modifies DNA in a non-processive manner and also methylates non-CpG sites. May preferentially methylate DNA linker between 2 nucleosomal cores and is inhibited by histone H1. Plays a role in paternal and maternal imprinting. Required for methylation of most imprinted loci in germ cells. Acts as a transcriptional corepressor for ZBTB18. Recruited to trimethylated 'Lys-36' of histone H3 (H3K36me3) sites. Can actively repress transcription through the recruitment of HDAC activity. Also has weak auto-methylation activity on Cys-706 in absence of DNA. This is DNA (cytosine-5)-methyltransferase 3A (Dnmt3a) from Rattus norvegicus (Rat).